A 515-amino-acid polypeptide reads, in one-letter code: Anthranilate synthase component 1 (515 aa).

Residues S50 and 281–283 (PYM) each bind L-tryptophan. 316–317 (GT) is a chorismate binding site. Residue E343 coordinates Mg(2+). Chorismate is bound by residues Y431, R451, 465-467 (GAG), and G467. E480 is a Mg(2+) binding site.

It belongs to the anthranilate synthase component I family. As to quaternary structure, heterotetramer consisting of two non-identical subunits: a beta subunit (TrpG) and a large alpha subunit (TrpE). Mg(2+) serves as cofactor.

It catalyses the reaction chorismate + L-glutamine = anthranilate + pyruvate + L-glutamate + H(+). The protein operates within amino-acid biosynthesis; L-tryptophan biosynthesis; L-tryptophan from chorismate: step 1/5. Feedback inhibited by tryptophan. Functionally, part of a heterotetrameric complex that catalyzes the two-step biosynthesis of anthranilate, an intermediate in the biosynthesis of L-tryptophan. In the first step, the glutamine-binding beta subunit (TrpG) of anthranilate synthase (AS) provides the glutamine amidotransferase activity which generates ammonia as a substrate that, along with chorismate, is used in the second step, catalyzed by the large alpha subunit of AS (TrpE) to produce anthranilate. In the absence of TrpG, TrpE can synthesize anthranilate directly from chorismate and high concentrations of ammonia. The polypeptide is Anthranilate synthase component 1 (trpE) (Bacillus subtilis (strain 168)).